The sequence spans 430 residues: Glutamate-1-semialdehyde 2,1-aminomutase (430 aa).

Lys-265 bears the N6-(pyridoxal phosphate)lysine mark.

This sequence belongs to the class-III pyridoxal-phosphate-dependent aminotransferase family. HemL subfamily. As to quaternary structure, homodimer. The cofactor is pyridoxal 5'-phosphate.

It is found in the cytoplasm. It carries out the reaction (S)-4-amino-5-oxopentanoate = 5-aminolevulinate. Its pathway is porphyrin-containing compound metabolism; protoporphyrin-IX biosynthesis; 5-aminolevulinate from L-glutamyl-tRNA(Glu): step 2/2. This Shewanella sp. (strain MR-7) protein is Glutamate-1-semialdehyde 2,1-aminomutase.